Consider the following 120-residue polypeptide: MHAEEIIRSIEAEHFKETLPTIYVGDTVRVGVQIREGNKERTQPYEGTVIAKRHGGINETITVRRIFQGVGVERVFLIHSPRITNIKVVRRGKVRRAKLYYLRDRVGKATRVKQRFDREL.

It belongs to the bacterial ribosomal protein bL19 family.

This protein is located at the 30S-50S ribosomal subunit interface and may play a role in the structure and function of the aminoacyl-tRNA binding site. The sequence is that of Large ribosomal subunit protein bL19 from Acaryochloris marina (strain MBIC 11017).